We begin with the raw amino-acid sequence, 751 residues long: MTISPPEREAKAKVSVDNNPVPTSFEKWGKPGHFDRTLARGPKTTTWIWNLHANAHDFDSQTSDLEDVSRKIFSAHFGHLAVVFVWLSGMYFHGAKFSNYEGWLADPTHIKPSAQVVWPIVGQGILNGDVGGGFHGIQITSGLFYLWRASGFTDSYQLYCTAIGGLVMAALMLFAGWFHYHVKAPKLEWFQNVESMMNHHLAGLLGLGSLGWAGHQIHVSMPINKLLDAGVAPKDIPLPHEFILEPSKMAELYPSFAQGLTPFFTLNWGVYSDFLTFKGGLNPVTGGLWLSDTAHHHLAIAVLFIIAGHMYRTNWGIGHSMKEILEAHKGPFTGEGHKGLYEILTTSWHAQLAINLALLGSLTIIVAQHMYAMPPYPYQAIDYATQLSLFTHHMWIGGFLIVGAGAHGAIFMVRDYDPAKNVNNLLDRMLRHRDAIISHLNWVCIFLGFHSFGLYIHNDTMRALGRPQDMFSDTAIQLQPIFAQWVQHLHTLAPGATAPNALATASYAFGGETIAVAGKVAMMPITLGTADFMVHHIHAFTIHVTALILLKGVLYARSSRLVPDKANLGFRFPCDGPGRGGTCQVSGWDHVFLGLFWMYNSLSIVIFHFSWKMQSDVWGTVSPDGSVTHVTLGNFAQSAITINGWLRDFLWAQAANVINSYGSALSAYGIMFLAGHFVFAFSLMFLFSGRGYWQELIESIVWAHNKLNVAPAIQPRALSIIQGRAVGVAHYLLGGIVTTWAFFLARSLSIG.

8 consecutive transmembrane segments (helical) span residues 72 to 95, 158 to 181, 197 to 221, 293 to 311, 348 to 371, 387 to 413, 435 to 457, and 532 to 550; these read IFSA…FHGA, LYCT…FHYH, MNHH…HVSM, TAHH…GHMY, WHAQ…QHMY, LSLF…IFMV, AIIS…LYIH, and FMVH…LILL. [4Fe-4S] cluster-binding residues include Cys574 and Cys583. Helical transmembrane passes span 590–611 and 665–687; these read HVFL…HFSW and LSAY…MFLF. A chlorophyll a'-binding site is contributed by His676. Residues Met684 and Tyr692 each contribute to the chlorophyll a site. Phylloquinone is bound at residue Trp693. Residues 725-745 form a helical membrane-spanning segment; the sequence is AVGVAHYLLGGIVTTWAFFLA.

Belongs to the PsaA/PsaB family. As to quaternary structure, the PsaA/B heterodimer binds the P700 chlorophyll special pair and subsequent electron acceptors. PSI consists of a core antenna complex that captures photons, and an electron transfer chain that converts photonic excitation into a charge separation. The cyanobacterial PSI reaction center is composed of one copy each of PsaA,B,C,D,E,F,I,J,K,L,M and X, and forms trimeric complexes. It depends on PSI electron transfer chain: 5 chlorophyll a, 1 chlorophyll a', 2 phylloquinones and 3 4Fe-4S clusters. PSI core antenna: 90 chlorophyll a, 22 carotenoids, 3 phospholipids and 1 galactolipid. P700 is a chlorophyll a/chlorophyll a' dimer, A0 is one or more chlorophyll a, A1 is one or both phylloquinones and FX is a shared 4Fe-4S iron-sulfur center. as a cofactor.

The protein localises to the cellular thylakoid membrane. It carries out the reaction reduced [plastocyanin] + hnu + oxidized [2Fe-2S]-[ferredoxin] = oxidized [plastocyanin] + reduced [2Fe-2S]-[ferredoxin]. Functionally, psaA and PsaB bind P700, the primary electron donor of photosystem I (PSI), as well as the electron acceptors A0, A1 and FX. PSI is a plastocyanin/cytochrome c6-ferredoxin oxidoreductase, converting photonic excitation into a charge separation, which transfers an electron from the donor P700 chlorophyll pair to the spectroscopically characterized acceptors A0, A1, FX, FA and FB in turn. Oxidized P700 is reduced on the lumenal side of the thylakoid membrane by plastocyanin or cytochrome c6. This Synechocystis sp. (strain ATCC 27184 / PCC 6803 / Kazusa) protein is Photosystem I P700 chlorophyll a apoprotein A1.